The sequence spans 846 residues: MRCNERNKKKAIFSNDDFSGEDTLMEDHLQLREKLSEDIEMIKASLKNNLVCSTLNDNEILTLSNYMQFFVFKGGDLVIKQGEKGSYFFIINSGKFDVYVNDKKVKSMGKGSSFGEAALIHNTQRSATIMAETDGTLWGVQRSTFRATLKQLSNRNFNENRSFIDSVSVFDMLTEAQKNMITNACVIQMFKPGETIVKQGDYGDVLFILKEGKATVFINDKEIRVLNKGSYFGERALLYDEPRSATIIAKEPTACASICRKLLNIVLGNLQVVLFRNIMTEALQQSEIFRQFSAEQLNDLADTAIVRDYPANYHILHKDKVKSVKYLIVLEGKVELFLDDESIGILTRGKSFGDQYVLNQKQKFRHTVKSLDVCKIALITESCLADCLGDNNIDASIDHNNKKSIIKKMYIFRYLSEQQCNLLIEAFRTTRYEEGDYIIQEGEVGSRFYIIKNGEVEVTKNGKRLRTLGKNDYFGERALLYDEPRTASIISKATSVECWFVDKSVFLQIIQGPMLTHLEERIKMQDTKVEMHELETERIIGRGTFGTVKLVHHKPTQIRYALKCVSKRSIISLNQQNNIKLEREITAENDHPFIIRLVRTFKDSNCFYFLTELVTGGELYDAIRKLGLLSKPQAQFYLGSIILAIEYLHERNIVYRDLKPENILLDKQGYVKLIDFGCAKKIQGRAYTLVGTPHYMAPEVILGKGYGCTVDIWALGVCLYEFICGPLPFGNDQEDQLEIFRDILTGQLTFPDYVSDQDSINLMKRLLCRLPQGRIGCSINGFKDIKEHAFFGNFNWDKLAGRLLEPPLVSKGETYAEDIDIKQIEEEDALNEGEPLDGDDSWDVDF.

The tract at residues 1–22 is autoinhibitory segment; the sequence is MRCNERNKKKAIFSNDDFSGED. CNMP-binding domain regions lie at residues 51-166, 169-268, 288-391, and 411-510; these read VCST…FIDS, VFDM…IVLG, IFRQ…LGDN, and IFRY…LQII. 3',5'-cyclic GMP is bound by residues lysine 106, glycine 115, glutamate 116, alanine 118, arginine 125, and serine 126. 3',5'-cyclic GMP is bound by residues arginine 466, glycine 475, glutamate 476, alanine 478, arginine 485, and threonine 486. The region spanning 534 to 791 is the Protein kinase domain; the sequence is LETERIIGRG…FKDIKEHAFF (258 aa). Residues 540-548 and lysine 563 contribute to the ATP site; that span reads IGRGTFGTV. Aspartate 657 (proton acceptor) is an active-site residue. The region spanning 792 to 846 is the AGC-kinase C-terminal domain; the sequence is GNFNWDKLAGRLLEPPLVSKGETYAEDIDIKQIEEEDALNEGEPLDGDDSWDVDF. The interval 824 to 846 is disordered; that stretch reads IEEEDALNEGEPLDGDDSWDVDF. Positions 825–846 are enriched in acidic residues; it reads EEEDALNEGEPLDGDDSWDVDF.

It belongs to the protein kinase superfamily. AGC Ser/Thr protein kinase family. cGMP subfamily. In terms of assembly, monomer. Mg(2+) serves as cofactor. Autophosphorylated.

Its subcellular location is the cytoplasm. The protein localises to the endoplasmic reticulum membrane. The catalysed reaction is L-seryl-[protein] + ATP = O-phospho-L-seryl-[protein] + ADP + H(+). It carries out the reaction L-threonyl-[protein] + ATP = O-phospho-L-threonyl-[protein] + ADP + H(+). Its activity is regulated as follows. Activated by cGMP. Not activated by cAMP. cGMP binding allosterically triggers a conformational change at the alpha C-helix of cGMP-binding domain 4, which bridges the regulatory and catalytic domains, causing the capping triad, composed of Arg-477, Gln-525 and Asp-526, to form and stabilize the active conformation. The cGMP-binding domains acts cooperatively to activate PKG. Functionally, serine/threonine protein kinase which acts as a downstream effector of the second messenger cGMP. Controls the release of Ca(2+) from intracellular stores by regulating phosphoinositide biosynthesis. Ca(2+) signals are essential for merozoite and sporozoite invasion and egress from host hepatocytes and erythrocytes, and, in the mosquito vector, for gametocyte activation, and ookinete and sporozoite motility. During the host liver stage, regulates the initial invasion of host hepatocytes by sporozoites by regulating sporozoite motility and microneme exocytosis. Following parasite development in the hepatocytes, required for the release of merosomes, a vesicle containing the mature merozoites. During the asexual blood stage, required for the progression from schizont to the ring stage following merozoite invasion of host erythrocytes and for merozoite egress. Regulates merozoite egress by promoting the release of exonemes and micronemes which contain proteins essential for egress. Phosphorylates CDPK1 predominantly at the late schizont stage; phosphorylation at 'Ser-64' regulates CDPK1 protein-protein interaction and phosphorylation at 'Thr-231' may regulate CDPK1 kinase activity. In the mosquito vector, required for the initiation of gametogenesis induced by xanthurenic acid, specifically the gametocyte differentiation from the crescent-shaped form to the spherical form. Required for the gliding motility of ookinetes to reach and penetrate the midgut epithelium by promoting Ca(2+)-mediated activation of CDPK1 and CDPK4. Also required for microneme secretion in ookinete by promoting Ca(2+)-mediated activation of CDPK3. The sequence is that of cGMP-dependent protein kinase from Plasmodium vivax (strain Salvador I).